The chain runs to 225 residues: UPF0502 protein Ajs_3392 (225 aa).

The protein belongs to the UPF0502 family.

The polypeptide is UPF0502 protein Ajs_3392 (Acidovorax sp. (strain JS42)).